The chain runs to 279 residues: Diaminopimelate epimerase (279 aa).

Residues Asn11 and Asn63 each coordinate substrate. Cys72 serves as the catalytic Proton donor. Substrate-binding positions include Gly73–Asn74, Asn161, Asn194, and Glu212–Arg213. Cys221 (proton acceptor) is an active-site residue. Gly222–Thr223 serves as a coordination point for substrate.

It belongs to the diaminopimelate epimerase family. Homodimer.

It is found in the cytoplasm. It catalyses the reaction (2S,6S)-2,6-diaminopimelate = meso-2,6-diaminopimelate. Its pathway is amino-acid biosynthesis; L-lysine biosynthesis via DAP pathway; DL-2,6-diaminopimelate from LL-2,6-diaminopimelate: step 1/1. Functionally, catalyzes the stereoinversion of LL-2,6-diaminopimelate (L,L-DAP) to meso-diaminopimelate (meso-DAP), a precursor of L-lysine and an essential component of the bacterial peptidoglycan. The sequence is that of Diaminopimelate epimerase from Moorella thermoacetica (strain ATCC 39073 / JCM 9320).